Reading from the N-terminus, the 319-residue chain is Acetyl esterase (319 aa).

Positions 91–93 (HGG) match the Involved in the stabilization of the negatively charged intermediate by the formation of the oxyanion hole motif. Catalysis depends on residues serine 165, aspartate 262, and histidine 292.

It belongs to the 'GDXG' lipolytic enzyme family. In terms of assembly, homodimer. Interacts with MalT and MelA.

The protein localises to the cytoplasm. In terms of biological role, displays esterase activity towards short chain fatty esters (acyl chain length of up to 8 carbons). Able to hydrolyze triacetylglycerol (triacetin) and tributyrylglycerol (tributyrin), but not trioleylglycerol (triolein) or cholesterol oleate. Negatively regulates MalT activity by antagonizing maltotriose binding. Inhibits MelA galactosidase activity. The polypeptide is Acetyl esterase (Escherichia coli O17:K52:H18 (strain UMN026 / ExPEC)).